We begin with the raw amino-acid sequence, 364 residues long: Aminomethyltransferase (364 aa).

This sequence belongs to the GcvT family. The glycine cleavage system is composed of four proteins: P, T, L and H.

It carries out the reaction N(6)-[(R)-S(8)-aminomethyldihydrolipoyl]-L-lysyl-[protein] + (6S)-5,6,7,8-tetrahydrofolate = N(6)-[(R)-dihydrolipoyl]-L-lysyl-[protein] + (6R)-5,10-methylene-5,6,7,8-tetrahydrofolate + NH4(+). Functionally, the glycine cleavage system catalyzes the degradation of glycine. The sequence is that of Aminomethyltransferase from Thermotoga petrophila (strain ATCC BAA-488 / DSM 13995 / JCM 10881 / RKU-1).